A 1438-amino-acid polypeptide reads, in one-letter code: DNA polymerase III PolC-type (1438 aa).

The 157-residue stretch at 422–578 (YVVFDVETTG…YDTEATAYIF (157 aa)) folds into the Exonuclease domain.

Belongs to the DNA polymerase type-C family. PolC subfamily.

The protein localises to the cytoplasm. It carries out the reaction DNA(n) + a 2'-deoxyribonucleoside 5'-triphosphate = DNA(n+1) + diphosphate. In terms of biological role, required for replicative DNA synthesis. This DNA polymerase also exhibits 3' to 5' exonuclease activity. This chain is DNA polymerase III PolC-type, found in Staphylococcus aureus (strain MRSA252).